Reading from the N-terminus, the 286-residue chain is tRNA pseudouridine synthase A (286 aa).

Aspartate 60 serves as the catalytic Nucleophile. A substrate-binding site is contributed by tyrosine 132.

Belongs to the tRNA pseudouridine synthase TruA family. Homodimer.

It carries out the reaction uridine(38/39/40) in tRNA = pseudouridine(38/39/40) in tRNA. Formation of pseudouridine at positions 38, 39 and 40 in the anticodon stem and loop of transfer RNAs. This is tRNA pseudouridine synthase A from Mycobacterium leprae (strain TN).